The following is an 86-amino-acid chain: Serine protease inhibitor Kazal-type 2 (86 aa).

A signal peptide spans 1-16 (MLRLVLLLLVTDFAAS). Positions 32-86 (QFRTPDCGHFDFPACPRNLNPVCGTDMNTYSNECTLCMKIREDGSHINIIKDEPC) constitute a Kazal-like domain. Intrachain disulfides connect C38–C68, C46–C65, and C54–C86.

Expressed in sperm (at protein level). Expressed in testis but not in ovary, brain, heart, kidney or lung. Within testis, expressed in epididymis and germ cells.

It localises to the secreted. It is found in the cytoplasmic vesicle. The protein localises to the secretory vesicle. Its subcellular location is the acrosome. Functionally, as a strong inhibitor of acrosin, it is required for normal spermiogenesis. It probably hinders premature activation of proacrosin and other proteases, thus preventing the cascade of events leading to spermiogenesis defects. May be involved in the regulation of serine protease-dependent germ cell apoptosis. It also inhibits trypsin. This Mus musculus (Mouse) protein is Serine protease inhibitor Kazal-type 2 (Spink2).